Here is a 212-residue protein sequence, read N- to C-terminus: MQLSLTQARTWKGLFLLVSCMFLWVYVTATRYDRKSNEEIYDNLLSSSRHIHRVAKKMYKILDSKLTEGVCFRNKNTKMCQTISTHSVKKNEDLLKVIINVSNFWTYPLKMLIPAVLTHLDSDDGMMTRAVELNYGNKVVLEGAKALLSRIQPGIEENNEPDRWSDLRELRSSKKSKHLLAFCKFFYCLRKDTKMVTCYLRALKHGKIKTIC.

Residues 1–29 (MQLSLTQARTWKGLFLLVSCMFLWVYVTA) form the signal peptide. The cysteines at positions 80 and 188 are disulfide-linked. Asn-100 is a glycosylation site (N-linked (GlcNAc...) asparagine).

This sequence belongs to the somatotropin/prolactin family. In terms of tissue distribution, expressed exclusively in decidua.

It is found in the secreted. This chain is Prolactin-3C1 (Prl3c1), found in Mus musculus (Mouse).